A 207-amino-acid chain; its full sequence is Small ribosomal subunit protein uS4 (207 aa).

Residues 30–54 (DKCKLDSKPGQHGRTSGARTSDYGN) are disordered. Over residues 42–53 (GRTSGARTSDYG) the composition is skewed to polar residues. Residues 97-160 (SRLDNVVYRM…KKQVRIAEAL (64 aa)) form the S4 RNA-binding domain.

It belongs to the universal ribosomal protein uS4 family. Part of the 30S ribosomal subunit. Contacts protein S5. The interaction surface between S4 and S5 is involved in control of translational fidelity.

One of the primary rRNA binding proteins, it binds directly to 16S rRNA where it nucleates assembly of the body of the 30S subunit. In terms of biological role, with S5 and S12 plays an important role in translational accuracy. The sequence is that of Small ribosomal subunit protein uS4 from Cupriavidus taiwanensis (strain DSM 17343 / BCRC 17206 / CCUG 44338 / CIP 107171 / LMG 19424 / R1) (Ralstonia taiwanensis (strain LMG 19424)).